The following is a 200-amino-acid chain: ATP-dependent Clp protease proteolytic subunit (200 aa).

Catalysis depends on Ser103, which acts as the Nucleophile. Residue His128 is part of the active site.

The protein belongs to the peptidase S14 family. As to quaternary structure, fourteen ClpP subunits assemble into 2 heptameric rings which stack back to back to give a disk-like structure with a central cavity, resembling the structure of eukaryotic proteasomes.

It is found in the cytoplasm. It carries out the reaction Hydrolysis of proteins to small peptides in the presence of ATP and magnesium. alpha-casein is the usual test substrate. In the absence of ATP, only oligopeptides shorter than five residues are hydrolyzed (such as succinyl-Leu-Tyr-|-NHMec, and Leu-Tyr-Leu-|-Tyr-Trp, in which cleavage of the -Tyr-|-Leu- and -Tyr-|-Trp bonds also occurs).. In terms of biological role, cleaves peptides in various proteins in a process that requires ATP hydrolysis. Has a chymotrypsin-like activity. Plays a major role in the degradation of misfolded proteins. In Vibrio vulnificus (strain CMCP6), this protein is ATP-dependent Clp protease proteolytic subunit.